Consider the following 329-residue polypeptide: ATPase get3 (329 aa).

27-34 is an ATP binding site; the sequence is KGGVGKTT. Asp56 is a catalytic residue. ATP contacts are provided by Glu231 and Asn258. Residues Cys268 and Cys271 each coordinate Zn(2+).

The protein belongs to the arsA ATPase family. In terms of assembly, homodimer.

Its subcellular location is the cytoplasm. It localises to the endoplasmic reticulum. The protein localises to the nucleus. Functionally, ATPase required for the post-translational delivery of tail-anchored (TA) proteins to the endoplasmic reticulum. Recognizes and selectively binds the transmembrane domain of TA proteins in the cytosol. This complex then targets to the endoplasmic reticulum by membrane-bound receptors, where the tail-anchored protein is released for insertion. This process is regulated by ATP binding and hydrolysis. ATP binding drives the homodimer towards the closed dimer state, facilitating recognition of newly synthesized TA membrane proteins. ATP hydrolysis is required for insertion. Subsequently, the homodimer reverts towards the open dimer state, lowering its affinity for the membrane-bound receptor, and returning it to the cytosol to initiate a new round of targeting. The sequence is that of ATPase get3 (get3) from Schizosaccharomyces pombe (strain 972 / ATCC 24843) (Fission yeast).